We begin with the raw amino-acid sequence, 37 residues long: Potassium channel toxin alpha-KTx 1.4 (37 aa).

3 disulfides stabilise this stretch: Cys7–Cys28, Cys13–Cys33, and Cys17–Cys35.

It belongs to the short scorpion toxin superfamily. Potassium channel inhibitor family. Alpha-KTx 01 subfamily. Expressed by the venom gland.

The protein resides in the secreted. In terms of biological role, blocks selectively the high conductance calcium-activated (maxi-K) potassium channels. The sequence is that of Potassium channel toxin alpha-KTx 1.4 from Centruroides limbatus (Bark scorpion).